A 346-amino-acid polypeptide reads, in one-letter code: MKFIGAVYLLFLLPALSFNSSYEGLEKKLKEVFTERTGILRHLSKTSKELDSIKGNLQSLKNEDAVPKKDVQRILELSHKQRDEMKSLQAALQKQLDDAAERAEKQQATIKFLKMEMEKKTKIIKDLQQENKSLKNKLLSGNKLCDIHAEESKKIQAQLKELRYGKKDLIFKGQQLMDLENKLKVAKDELEKAALDKESQLKALKDTVHICFSSVLHSQTASLHRFPATPTNLLRYSALVNNSRVTFQQPHMKDIPKVPRITTTSKLPVSSAVMRRESTGPKDCQMVKVGSDCSHNQTESSSVMKKTFGHSQSKTPEQNGQGQARTAEESVKTDGELKKTQSDKHN.

Positions 1-17 are cleaved as a signal peptide; that stretch reads MKFIGAVYLLFLLPALS. N-linked (GlcNAc...) asparagine glycosylation is found at asparagine 19 and asparagine 131. A coiled-coil region spans residues 41-209; the sequence is RHLSKTSKEL…QLKALKDTVH (169 aa). Residues 162 to 190 are leucine-zipper; it reads LRYGKKDLIFKGQQLMDLENKLKVAKDEL. 2 N-linked (GlcNAc...) asparagine glycosylation sites follow: asparagine 241 and asparagine 296. The tract at residues 271-346 is disordered; the sequence is SAVMRRESTG…LKKTQSDKHN (76 aa). Positions 293 to 324 are enriched in polar residues; it reads CSHNQTESSSVMKKTFGHSQSKTPEQNGQGQA. Basic and acidic residues predominate over residues 326 to 346; the sequence is TAEESVKTDGELKKTQSDKHN.

Its subcellular location is the secreted. The protein is Leucine zipper protein 2 (luzp2) of Danio rerio (Zebrafish).